The sequence spans 721 residues: Cell wall protein RBT1 (721 aa).

Positions 1–20 (MRFATAQLAALAYYILSTEA) are cleaved as a signal peptide. The Flo11 domain maps to 55–278 (GSKNKREAEI…DCQCDTPSPS (224 aa)). Disordered regions lie at residues 278 to 410 (STTT…LTTT), 453 to 510 (LTET…TVTE), and 555 to 666 (TPAT…ALVS). Positions 454 to 499 (TETTPVPSSVDSTSVTSAPETTPESTAPESSAPESSAPESSAPVTE) are enriched in low complexity. Over residues 500-510 (TPTGPVSTVTE) the composition is skewed to polar residues. Composition is skewed to low complexity over residues 555–575 (TPAT…VPAT) and 584–663 (SSAP…KTSA). The GPI-anchor amidated serine moiety is linked to residue S696. Residues 697-721 (SFEGAGNNMRLTYGAAIIGLAAFLI) constitute a propeptide, removed in mature form.

It belongs to the HWP1 family. The GPI-anchor is attached to the protein in the endoplasmic reticulum and serves to target the protein to the cell surface. There, the glucosamine-inositol phospholipid moiety is cleaved off and the GPI-modified mannoprotein is covalently attached via its lipidless GPI glycan remnant to the 1,6-beta-glucan of the outer cell wall layer.

It is found in the secreted. The protein localises to the cell wall. It localises to the membrane. GPI-anchored cell wall protein required for mating efficiency, biofilm formation, and virulence. Involved in normal disseminated infection, but not in intestinal colonization. The protein is Cell wall protein RBT1 (RBT1) of Candida albicans (strain SC5314 / ATCC MYA-2876) (Yeast).